The primary structure comprises 1641 residues: Maestro heat-like repeat-containing protein family member 1 (1641 aa).

HEAT repeat units follow at residues 3 to 41, 159 to 198, 344 to 382, 385 to 423, 1048 to 1086, 1358 to 1396, and 1605 to 1641; these read ESSM…ARPV, VPFL…GALE, CSSP…SAAA, EDKK…HGYL, PDQL…ERGG, LMLL…GCPD, and QVDL…VKLA.

The protein belongs to the MROH1 family. Homooligomer; homooligomerizes at lysosome scission sites.

Its subcellular location is the lysosome membrane. In terms of biological role, lysosome fission factor. Recruited to lysosomes by RAB7 (RAB7A or RAB7B) at scission sites and homooligomerizes to mediate the constriction and scission of lysosomal tubules. May sever membranes by inserting amphipathic helices into one bilayer leaflet. Lysosome fission is required to maintain their steady-state number, shape, size, composition and function, and to accomplish regeneration. The sequence is that of Maestro heat-like repeat-containing protein family member 1 from Homo sapiens (Human).